The sequence spans 267 residues: MIKIAVCGAAGRMGQRLINSVQEAEGVCLSGVLERPAHPLVGQDAGLVAGCGALGVSISDDLNAVIAGCDVLIDFTAPKVSLKNLEACGLQRKSIVIGSTGFTPEERQLAMELTRNISAILAPNMSVGVNVCFKILKDIAATLGDDFDVEIVESHHRMKVDAPSGTAVRMGQVVAEALGRDYDRVANFHREGITGSRTKDEIGMQTIRGGDIVGEHTVYFIGMGERIELSHRAMNRDMFSRGAVRAATWVVGQAPGLYDMQDVLGLK.

NAD(+) contacts are provided by residues 8-13 (GAAGRM) and glutamate 34. Residue arginine 35 coordinates NADP(+). NAD(+)-binding positions include 98–100 (GST) and 122–125 (APNM). Histidine 155 (proton donor/acceptor) is an active-site residue. Histidine 156 is a (S)-2,3,4,5-tetrahydrodipicolinate binding site. The Proton donor role is filled by lysine 159. 165-166 (GT) lines the (S)-2,3,4,5-tetrahydrodipicolinate pocket.

It belongs to the DapB family.

It localises to the cytoplasm. The catalysed reaction is (S)-2,3,4,5-tetrahydrodipicolinate + NAD(+) + H2O = (2S,4S)-4-hydroxy-2,3,4,5-tetrahydrodipicolinate + NADH + H(+). It catalyses the reaction (S)-2,3,4,5-tetrahydrodipicolinate + NADP(+) + H2O = (2S,4S)-4-hydroxy-2,3,4,5-tetrahydrodipicolinate + NADPH + H(+). The protein operates within amino-acid biosynthesis; L-lysine biosynthesis via DAP pathway; (S)-tetrahydrodipicolinate from L-aspartate: step 4/4. Functionally, catalyzes the conversion of 4-hydroxy-tetrahydrodipicolinate (HTPA) to tetrahydrodipicolinate. This Pelobacter propionicus (strain DSM 2379 / NBRC 103807 / OttBd1) protein is 4-hydroxy-tetrahydrodipicolinate reductase.